A 123-amino-acid chain; its full sequence is Small ribosomal subunit protein uS12 (123 aa).

Residues 1 to 28 (MPTIQQLIRTERSKVQKKTKSPALKQCP) are disordered. 3-methylthioaspartic acid is present on D89. A disordered region spans residues 104 to 123 (ATGVKDRKQGRSKYGTKRPK). Positions 113 to 123 (GRSKYGTKRPK) are enriched in basic residues.

The protein belongs to the universal ribosomal protein uS12 family. As to quaternary structure, part of the 30S ribosomal subunit. Contacts proteins S8 and S17. May interact with IF1 in the 30S initiation complex.

Functionally, with S4 and S5 plays an important role in translational accuracy. Its function is as follows. Interacts with and stabilizes bases of the 16S rRNA that are involved in tRNA selection in the A site and with the mRNA backbone. Located at the interface of the 30S and 50S subunits, it traverses the body of the 30S subunit contacting proteins on the other side and probably holding the rRNA structure together. The combined cluster of proteins S8, S12 and S17 appears to hold together the shoulder and platform of the 30S subunit. This chain is Small ribosomal subunit protein uS12, found in Gloeothece citriformis (strain PCC 7424) (Cyanothece sp. (strain PCC 7424)).